Consider the following 710-residue polypeptide: Zinc finger and BTB domain-containing protein 24 (710 aa).

A BTB domain is found at 37–103; the sequence is CDITLIVENV…IYTGYLHASE (67 aa). Disordered regions lie at residues 134 to 176 and 202 to 256; these read APKP…EGRS and EEDS…SRRR. Positions 159-171 form a DNA-binding region, a.T hook; that stretch reads KRKRGRPRKANGL. 2 stretches are compositionally biased toward basic and acidic residues: residues 202-219 and 231-244; these read EEDS…KESE and PAEK…KAGD. 8 C2H2-type zinc fingers span residues 293 to 315, 321 to 343, 349 to 371, 377 to 399, 405 to 427, 433 to 455, 461 to 483, and 489 to 511; these read ARCK…QRRH, FKCN…TRMH, YTCT…MSLH, FTCD…YRVH, PECS…LRTH, FTCE…IRIH, YSCS…CILH, and FSCP…LKIH. The interval 651 to 676 is disordered; sequence EQTTSSVPAADTGARATPVPSTRPGA.

It belongs to the krueppel C2H2-type zinc-finger protein family. As to quaternary structure, interacts with MN1. Widely expressed. Highest level in liver, testis and kidney.

Its subcellular location is the nucleus. May be involved in BMP2-induced transcription. This Mus musculus (Mouse) protein is Zinc finger and BTB domain-containing protein 24 (Zbtb24).